Consider the following 143-residue polypeptide: uncharacterized protein (143 aa).

Helical transmembrane passes span 7–29, 52–74, 87–105, and 120–142; these read LFLF…LSLV, FSLY…NTYL, LGVF…LWAG, and WLGI…IRLG.

The protein localises to the cell membrane. This is an uncharacterized protein from Aquifex aeolicus (strain VF5).